A 618-amino-acid chain; its full sequence is Probable Xaa-Pro aminopeptidase P (618 aa).

Residues Asp-414, Asp-425, Glu-523, and Glu-537 each coordinate Mn(2+).

This sequence belongs to the peptidase M24B family. Requires Mn(2+) as cofactor.

The enzyme catalyses Release of any N-terminal amino acid, including proline, that is linked to proline, even from a dipeptide or tripeptide.. Functionally, catalyzes the removal of a penultimate prolyl residue from the N-termini of peptides. This Metarhizium acridum (strain CQMa 102) protein is Probable Xaa-Pro aminopeptidase P (AMPP).